Reading from the N-terminus, the 323-residue chain is Lipoyl synthase (323 aa).

Cysteine 53, cysteine 58, cysteine 64, cysteine 79, cysteine 83, cysteine 86, and serine 293 together coordinate [4Fe-4S] cluster. Positions 65-282 (WTKKQATVMI…AATARAKGFS (218 aa)) constitute a Radical SAM core domain.

It belongs to the radical SAM superfamily. Lipoyl synthase family. Requires [4Fe-4S] cluster as cofactor.

The protein resides in the cytoplasm. It catalyses the reaction [[Fe-S] cluster scaffold protein carrying a second [4Fe-4S](2+) cluster] + N(6)-octanoyl-L-lysyl-[protein] + 2 oxidized [2Fe-2S]-[ferredoxin] + 2 S-adenosyl-L-methionine + 4 H(+) = [[Fe-S] cluster scaffold protein] + N(6)-[(R)-dihydrolipoyl]-L-lysyl-[protein] + 4 Fe(3+) + 2 hydrogen sulfide + 2 5'-deoxyadenosine + 2 L-methionine + 2 reduced [2Fe-2S]-[ferredoxin]. It participates in protein modification; protein lipoylation via endogenous pathway; protein N(6)-(lipoyl)lysine from octanoyl-[acyl-carrier-protein]: step 2/2. Catalyzes the radical-mediated insertion of two sulfur atoms into the C-6 and C-8 positions of the octanoyl moiety bound to the lipoyl domains of lipoate-dependent enzymes, thereby converting the octanoylated domains into lipoylated derivatives. This is Lipoyl synthase from Zymomonas mobilis subsp. mobilis (strain ATCC 31821 / ZM4 / CP4).